Here is a 240-residue protein sequence, read N- to C-terminus: UDP-2,3-diacylglucosamine hydrolase (240 aa).

Mn(2+) is bound by residues D8, H10, D41, N79, and H114. A substrate-binding site is contributed by 79 to 80; that stretch reads NR. The substrate site is built by D122, S160, T164, K167, and H195. 2 residues coordinate Mn(2+): H195 and H197.

The protein belongs to the LpxH family. Requires Mn(2+) as cofactor.

The protein resides in the cell inner membrane. The catalysed reaction is UDP-2-N,3-O-bis[(3R)-3-hydroxytetradecanoyl]-alpha-D-glucosamine + H2O = 2-N,3-O-bis[(3R)-3-hydroxytetradecanoyl]-alpha-D-glucosaminyl 1-phosphate + UMP + 2 H(+). It participates in glycolipid biosynthesis; lipid IV(A) biosynthesis; lipid IV(A) from (3R)-3-hydroxytetradecanoyl-[acyl-carrier-protein] and UDP-N-acetyl-alpha-D-glucosamine: step 4/6. Hydrolyzes the pyrophosphate bond of UDP-2,3-diacylglucosamine to yield 2,3-diacylglucosamine 1-phosphate (lipid X) and UMP by catalyzing the attack of water at the alpha-P atom. Involved in the biosynthesis of lipid A, a phosphorylated glycolipid that anchors the lipopolysaccharide to the outer membrane of the cell. This chain is UDP-2,3-diacylglucosamine hydrolase, found in Pseudomonas aeruginosa (strain UCBPP-PA14).